A 207-amino-acid polypeptide reads, in one-letter code: Small ribosomal subunit protein uS4 (207 aa).

Residues 31–52 form a disordered region; sequence KAKFDSKPGQHGRTSGARTSDY. Positions 97-157 constitute an S4 RNA-binding domain; the sequence is CRLDNVVYRM…DKSKKQARIV (61 aa).

The protein belongs to the universal ribosomal protein uS4 family. Part of the 30S ribosomal subunit. Contacts protein S5. The interaction surface between S4 and S5 is involved in control of translational fidelity.

In terms of biological role, one of the primary rRNA binding proteins, it binds directly to 16S rRNA where it nucleates assembly of the body of the 30S subunit. Functionally, with S5 and S12 plays an important role in translational accuracy. The chain is Small ribosomal subunit protein uS4 from Acidovorax sp. (strain JS42).